The sequence spans 183 residues: Holliday junction branch migration complex subunit RuvA (183 aa).

The segment at 1-63 (MIVGLIGVVE…EDAHLLYGFL (63 aa)) is domain I. Residues 64-141 (EEGEKILFER…IQDETKPMHN (78 aa)) form a domain II region. Position 141 (asparagine 141) is a region of interest, flexible linker. A domain III region spans residues 141 to 183 (NEVFLALESLGFKSAEINKVLKTLKPSLSIEAAIKEALQQLRS).

The protein belongs to the RuvA family. Homotetramer. Forms an RuvA(8)-RuvB(12)-Holliday junction (HJ) complex. HJ DNA is sandwiched between 2 RuvA tetramers; dsDNA enters through RuvA and exits via RuvB. An RuvB hexamer assembles on each DNA strand where it exits the tetramer. Each RuvB hexamer is contacted by two RuvA subunits (via domain III) on 2 adjacent RuvB subunits; this complex drives branch migration. In the full resolvosome a probable DNA-RuvA(4)-RuvB(12)-RuvC(2) complex forms which resolves the HJ.

Its subcellular location is the cytoplasm. The RuvA-RuvB-RuvC complex processes Holliday junction (HJ) DNA during genetic recombination and DNA repair, while the RuvA-RuvB complex plays an important role in the rescue of blocked DNA replication forks via replication fork reversal (RFR). RuvA specifically binds to HJ cruciform DNA, conferring on it an open structure. The RuvB hexamer acts as an ATP-dependent pump, pulling dsDNA into and through the RuvAB complex. HJ branch migration allows RuvC to scan DNA until it finds its consensus sequence, where it cleaves and resolves the cruciform DNA. This chain is Holliday junction branch migration complex subunit RuvA, found in Helicobacter pylori (strain G27).